Here is a 457-residue protein sequence, read N- to C-terminus: MPPVPLLRLQCGVNSYDWGKVGHESAAAKYAATTAASDFSIQSDKPYAELWMGTHPSLPSKDLETQRTLLDMVQDNQALISQEVSERYGGKLPFLFKVLSIRKALSIQAHPNKKLAEKLHARDPRNYPDDNHKPEMTIAITPFEGLCGFRPLVEIIHFLKAVAPLRQLVGERAASEFENTVKGSEESEDPAVTEKNKQALRTLFTSLMRSSPESIEAATKELVAIAQNSPETFTTSSSTPETNPTNPAELAAITVRLNGQFPNDIGSFVFFFLNFVKLEPGEAMFLKADDIHAYISGDIIECMASSDNVVRAGFTPKFKDVDTLVDMLTYSYAPIAEQKLEPTDYPYAVLNAPAYSSGSSCILYDPPIEEFSVVKTDLKRQGAKATFDGISGPSIVICTAGAGKITVGPKTEEVNEGYVFFVGANAECIIESTGEDTFTTFKAFCDLTGKEDMVNGN.

Zn(2+) contacts are provided by Gln-108, His-110, Glu-135, and His-292. The active site involves Arg-311.

Belongs to the mannose-6-phosphate isomerase type 1 family. The cofactor is Zn(2+).

It localises to the cytoplasm. It carries out the reaction D-mannose 6-phosphate = D-fructose 6-phosphate. The protein operates within nucleotide-sugar biosynthesis; GDP-alpha-D-mannose biosynthesis; alpha-D-mannose 1-phosphate from D-fructose 6-phosphate: step 1/2. In terms of biological role, involved in the synthesis of the GDP-mannose and dolichol-phosphate-mannose required for a number of critical mannosyl transfer reactions. The chain is Mannose-6-phosphate isomerase (pmi1) from Aspergillus fumigatus (strain ATCC MYA-4609 / CBS 101355 / FGSC A1100 / Af293) (Neosartorya fumigata).